Here is a 360-residue protein sequence, read N- to C-terminus: Membrane-bound lytic murein transglycosylase C (360 aa).

The N-terminal stretch at 1-16 (MKKYLALALIAPLLVS) is a signal peptide. C17 carries the N-palmitoyl cysteine lipid modification. The S-diacylglycerol cysteine moiety is linked to residue C17.

This sequence belongs to the transglycosylase Slt family.

The protein localises to the cell outer membrane. The enzyme catalyses Exolytic cleavage of the (1-&gt;4)-beta-glycosidic linkage between N-acetylmuramic acid (MurNAc) and N-acetylglucosamine (GlcNAc) residues in peptidoglycan, from either the reducing or the non-reducing ends of the peptidoglycan chains, with concomitant formation of a 1,6-anhydrobond in the MurNAc residue.. In terms of biological role, murein-degrading enzyme. May play a role in recycling of muropeptides during cell elongation and/or cell division. The chain is Membrane-bound lytic murein transglycosylase C from Klebsiella pneumoniae (strain 342).